We begin with the raw amino-acid sequence, 32 residues long: Periplasmic [NiFeSe] hydrogenase small subunit (32 aa).

Residues Cys18 and Cys21 each coordinate [4Fe-4S] cluster.

It belongs to the [NiFe]/[NiFeSe] hydrogenase small subunit family. In terms of assembly, heterodimer of a large and a small subunit. Requires [3Fe-4S] cluster as cofactor. It depends on [4Fe-4S] cluster as a cofactor.

It localises to the periplasm. The catalysed reaction is H2 + A = AH2. This is Periplasmic [NiFeSe] hydrogenase small subunit from Desulfomicrobium norvegicum (strain DSM 1741 / NCIMB 8310) (Desulfovibrio baculatus (strain Norway 4)).